The primary structure comprises 359 residues: 3-dehydroquinate synthase (359 aa).

NAD(+) is bound by residues 71 to 76 (DGEQFK), 105 to 109 (GVIGD), 129 to 130 (TT), lysine 142, lysine 151, and 169 to 172 (CLQT). Zn(2+) is bound by residues glutamate 184, histidine 247, and histidine 264.

This sequence belongs to the sugar phosphate cyclases superfamily. Dehydroquinate synthase family. Co(2+) is required as a cofactor. Zn(2+) serves as cofactor. It depends on NAD(+) as a cofactor.

It localises to the cytoplasm. The catalysed reaction is 7-phospho-2-dehydro-3-deoxy-D-arabino-heptonate = 3-dehydroquinate + phosphate. The protein operates within metabolic intermediate biosynthesis; chorismate biosynthesis; chorismate from D-erythrose 4-phosphate and phosphoenolpyruvate: step 2/7. Functionally, catalyzes the conversion of 3-deoxy-D-arabino-heptulosonate 7-phosphate (DAHP) to dehydroquinate (DHQ). This is 3-dehydroquinate synthase from Shewanella sp. (strain ANA-3).